Reading from the N-terminus, the 198-residue chain is Holliday junction branch migration complex subunit RuvA (198 aa).

Residues 1-63 (MYDYIKGQLT…EDAQLLFGFH (63 aa)) are domain I. The tract at residues 64 to 142 (SEEEKDVFLK…EAPKEESSKP (79 aa)) is domain II. A flexible linker region spans residues 143-147 (PKAKQ). The segment at 148-198 (QGNEQLDEAVEALLALGYKATELKKIRAFFEGTSETAEQYIKSALKMLMKG) is domain III.

The protein belongs to the RuvA family. Homotetramer. Forms an RuvA(8)-RuvB(12)-Holliday junction (HJ) complex. HJ DNA is sandwiched between 2 RuvA tetramers; dsDNA enters through RuvA and exits via RuvB. An RuvB hexamer assembles on each DNA strand where it exits the tetramer. Each RuvB hexamer is contacted by two RuvA subunits (via domain III) on 2 adjacent RuvB subunits; this complex drives branch migration. In the full resolvosome a probable DNA-RuvA(4)-RuvB(12)-RuvC(2) complex forms which resolves the HJ.

The protein resides in the cytoplasm. Functionally, the RuvA-RuvB-RuvC complex processes Holliday junction (HJ) DNA during genetic recombination and DNA repair, while the RuvA-RuvB complex plays an important role in the rescue of blocked DNA replication forks via replication fork reversal (RFR). RuvA specifically binds to HJ cruciform DNA, conferring on it an open structure. The RuvB hexamer acts as an ATP-dependent pump, pulling dsDNA into and through the RuvAB complex. HJ branch migration allows RuvC to scan DNA until it finds its consensus sequence, where it cleaves and resolves the cruciform DNA. The sequence is that of Holliday junction branch migration complex subunit RuvA from Streptococcus equi subsp. equi (strain 4047).